The chain runs to 178 residues: Large ribosomal subunit protein bL25 (178 aa).

This sequence belongs to the bacterial ribosomal protein bL25 family. CTC subfamily. Part of the 50S ribosomal subunit; part of the 5S rRNA/L5/L18/L25 subcomplex. Contacts the 5S rRNA. Binds to the 5S rRNA independently of L5 and L18.

Functionally, this is one of the proteins that binds to the 5S RNA in the ribosome where it forms part of the central protuberance. In Wolinella succinogenes (strain ATCC 29543 / DSM 1740 / CCUG 13145 / JCM 31913 / LMG 7466 / NCTC 11488 / FDC 602W) (Vibrio succinogenes), this protein is Large ribosomal subunit protein bL25.